The sequence spans 212 residues: ATP phosphoribosyltransferase (212 aa).

The protein belongs to the ATP phosphoribosyltransferase family. Short subfamily. As to quaternary structure, heteromultimer composed of HisG and HisZ subunits.

It is found in the cytoplasm. The catalysed reaction is 1-(5-phospho-beta-D-ribosyl)-ATP + diphosphate = 5-phospho-alpha-D-ribose 1-diphosphate + ATP. It participates in amino-acid biosynthesis; L-histidine biosynthesis; L-histidine from 5-phospho-alpha-D-ribose 1-diphosphate: step 1/9. Its function is as follows. Catalyzes the condensation of ATP and 5-phosphoribose 1-diphosphate to form N'-(5'-phosphoribosyl)-ATP (PR-ATP). Has a crucial role in the pathway because the rate of histidine biosynthesis seems to be controlled primarily by regulation of HisG enzymatic activity. This Geobacter metallireducens (strain ATCC 53774 / DSM 7210 / GS-15) protein is ATP phosphoribosyltransferase.